The following is a 490-amino-acid chain: Cytochrome P450 71A25 (490 aa).

Residues 1-21 (MMMMIILLWSIIFMTILFLKK) traverse the membrane as a helical segment. Cys-431 is a heme binding site.

It belongs to the cytochrome P450 family. It depends on heme as a cofactor.

It is found in the membrane. The polypeptide is Cytochrome P450 71A25 (CYP71A25) (Arabidopsis thaliana (Mouse-ear cress)).